The following is a 384-amino-acid chain: N-acetylneuraminate epimerase (384 aa).

Positions 1–24 (MMKTKYLLLPLLASSSLLSHMAFA) are cleaved as a signal peptide. Kelch repeat units follow at residues 46 to 90 (KVYV…TVVG), 92 to 145 (NIFV…YSPD), 147 to 184 (KQVL…KIVD), 185 to 230 (DYMG…VIDG), 233 to 281 (ITLI…IAGA), 303 to 352 (AQFE…SVKG), and 354 to 383 (VLMV…IDIV). The active-site Proton acceptor is the E239.

This sequence belongs to the NanM family. In terms of assembly, homodimer.

The protein localises to the periplasm. The enzyme catalyses N-acetyl-alpha-neuraminate = N-acetyl-beta-neuraminate. Functionally, converts alpha-N-acetylneuranimic acid (Neu5Ac) to the beta-anomer, accelerating the equilibrium between the alpha- and beta-anomers. Probably facilitates sialidase-negative bacteria to compete successfully for limited amounts of extracellular Neu5Ac, which is likely taken up in the beta-anomer. In addition, the rapid removal of sialic acid from solution might be advantageous to the bacterium to damp down host responses. The protein is N-acetylneuraminate epimerase of Vibrio vulnificus (strain YJ016).